The chain runs to 506 residues: UDP-glycosyltransferase eriJ (506 aa).

It belongs to the UDP-glycosyltransferase family.

It catalyses the reaction 11-O-acetylcyathatriol + UDP-alpha-D-xylose = erinacine Q + UDP + H(+). It carries out the reaction 11-O-acetylcyathatriol + UDP-alpha-D-glucose = erinacine Q2 + UDP + H(+). Its pathway is secondary metabolite biosynthesis. Functionally, UDP-glycosyltransferase; part of the gene cluster that mediates the biosynthesis of erinacines, cyathane-xylosides that show unique biological activities, including leishmanicidal activity, stimulating activity for nerve growth-factor synthesis, and agonistic activity toward the kappa opioid receptor. Within the pathway, eriJ tranfers xylose from UDP-xylose onto C-14 of 11-O-acetyl-cyathatriol to form eracine Q, and, at a lower rate, glucose from UDP-D-glucose to produce eracine Q2. The first step of the erinacines biosynthesis pathway is catalyzed by the geranylgeranyl diphosphate (GGPP) synthase eriE via conversion of farnesyl pyrophosphate and isopentyl pyrophosphate into geranylgeranyl pyrophosphate (GGPP). GGPP is then substrate of the diterpene cyclase eriG for the production of cyatha-3,12-diene. The cytochrome P450 monooxygenase eriI then hydroxylates cyatha-3,12-diene at C-14 of the seven-membered ring to produce erinacol, which is further hydroxylated at C-15 by the cytochrome P450 monooxygenase eriC to yield cyathadiol. The cytochrome P450 monooxygenase eriA then catalyzes C-11 hydroxylation in the presence of the short chain dehydrogenase/reductase (SDR) eriH, which leads to the production of cyathatriol. The acetyltransferase eriL converts cyathatriol into 11-O-acetyl-cyathatriol. The SDR eriH catalyzes further oxidation of 11-O-acetyl-cyathatriol into 1-O-acetylcyathin A3. Finally, the glycosyl transferase eriJ tranfers xylose from UDP-xylose onto C-14 of 11-O-acetyl-cyathatriol to form eracine Q. EriJ is also able to convert 11-O-acetyl-cyathatriol to eracine Q2 by using UDP-D-glucose as cosubstrate, but at a lower rate. The polypeptide is UDP-glycosyltransferase eriJ (Hericium erinaceus (Lion's mane mushroom)).